The chain runs to 336 residues: 4-hydroxy-3-methylbut-2-enyl diphosphate reductase (336 aa).

Cys-32 provides a ligand contact to [4Fe-4S] cluster. Positions 61 and 94 each coordinate (2E)-4-hydroxy-3-methylbut-2-enyl diphosphate. His-61 and His-94 together coordinate dimethylallyl diphosphate. Residues His-61 and His-94 each coordinate isopentenyl diphosphate. [4Fe-4S] cluster is bound at residue Cys-116. His-148 serves as a coordination point for (2E)-4-hydroxy-3-methylbut-2-enyl diphosphate. His-148 contributes to the dimethylallyl diphosphate binding site. Isopentenyl diphosphate is bound at residue His-148. Catalysis depends on Glu-150, which acts as the Proton donor. Thr-189 contributes to the (2E)-4-hydroxy-3-methylbut-2-enyl diphosphate binding site. Cys-219 contributes to the [4Fe-4S] cluster binding site. Residues Ser-247, Ser-248, Asn-249, and Ser-292 each contribute to the (2E)-4-hydroxy-3-methylbut-2-enyl diphosphate site. Dimethylallyl diphosphate-binding residues include Ser-247, Ser-248, Asn-249, and Ser-292. Residues Ser-247, Ser-248, Asn-249, and Ser-292 each contribute to the isopentenyl diphosphate site.

The protein belongs to the IspH family. [4Fe-4S] cluster serves as cofactor.

The catalysed reaction is isopentenyl diphosphate + 2 oxidized [2Fe-2S]-[ferredoxin] + H2O = (2E)-4-hydroxy-3-methylbut-2-enyl diphosphate + 2 reduced [2Fe-2S]-[ferredoxin] + 2 H(+). The enzyme catalyses dimethylallyl diphosphate + 2 oxidized [2Fe-2S]-[ferredoxin] + H2O = (2E)-4-hydroxy-3-methylbut-2-enyl diphosphate + 2 reduced [2Fe-2S]-[ferredoxin] + 2 H(+). It functions in the pathway isoprenoid biosynthesis; dimethylallyl diphosphate biosynthesis; dimethylallyl diphosphate from (2E)-4-hydroxy-3-methylbutenyl diphosphate: step 1/1. Its pathway is isoprenoid biosynthesis; isopentenyl diphosphate biosynthesis via DXP pathway; isopentenyl diphosphate from 1-deoxy-D-xylulose 5-phosphate: step 6/6. Its function is as follows. Catalyzes the conversion of 1-hydroxy-2-methyl-2-(E)-butenyl 4-diphosphate (HMBPP) into a mixture of isopentenyl diphosphate (IPP) and dimethylallyl diphosphate (DMAPP). Acts in the terminal step of the DOXP/MEP pathway for isoprenoid precursor biosynthesis. The sequence is that of 4-hydroxy-3-methylbut-2-enyl diphosphate reductase from Gluconobacter oxydans (strain 621H) (Gluconobacter suboxydans).